A 547-amino-acid chain; its full sequence is MAELTISSDEIRSAIENYTASYSPEASREEVGVVTDTSDGIAHVSGLPSAMANELLEFPGGILGVALNLDATEIGAVILGDYENIQEGQEVKRTGDVLSVPVGDAFLGRVINPLGQPIDGLGEIASDETRALELQAASVLERQPVEEPLQTGIKAIDAMTPIGRGQRQLVIGDRKTGKTAVCIDAILNQKANWETGDEKQQVRCIYVAIGQKGSTIAGVKAALEEQGAMEYTTIVAAPASDSAGFKWLAPYTGSAIGQHWMYQGKHVLVVFDDLTKQAEAYRAISLLLRRPPGREAYPGDVFYLHSRLLERSAKLSDALGGGSLTALPIIETKANDVSAYIPTNVISITDGQVFLESDLFNKGVRPAINVGISVSRVGGAAQTKGMKKVSGSLRLELAQFRELEAFSAFASDLDAASKAQLERGARLVELLKQDQYSPIPVEDQIVSIYLAGEGVFDSVPVGDVRRFEAELLDELHRTASGVYESIKGGKALDADNAKALVEATDKFKETFLASDGSRVVNEAEAEALDAGEVGHEQINVKRTTVSK.

172–179 provides a ligand contact to ATP; that stretch reads GDRKTGKT.

It belongs to the ATPase alpha/beta chains family. In terms of assembly, F-type ATPases have 2 components, CF(1) - the catalytic core - and CF(0) - the membrane proton channel. CF(1) has five subunits: alpha(3), beta(3), gamma(1), delta(1), epsilon(1). CF(0) has three main subunits: a(1), b(2) and c(9-12). The alpha and beta chains form an alternating ring which encloses part of the gamma chain. CF(1) is attached to CF(0) by a central stalk formed by the gamma and epsilon chains, while a peripheral stalk is formed by the delta and b chains.

It localises to the cell membrane. The catalysed reaction is ATP + H2O + 4 H(+)(in) = ADP + phosphate + 5 H(+)(out). Its function is as follows. Produces ATP from ADP in the presence of a proton gradient across the membrane. The alpha chain is a regulatory subunit. The chain is ATP synthase subunit alpha from Rhodococcus opacus (strain B4).